The primary structure comprises 441 residues: Methylenetetrahydrofolate--tRNA-(uracil-5-)-methyltransferase TrmFO (441 aa).

FAD is bound at residue 10–15; it reads GAGLAG.

This sequence belongs to the MnmG family. TrmFO subfamily. FAD is required as a cofactor.

The protein localises to the cytoplasm. The catalysed reaction is uridine(54) in tRNA + (6R)-5,10-methylene-5,6,7,8-tetrahydrofolate + NADH + H(+) = 5-methyluridine(54) in tRNA + (6S)-5,6,7,8-tetrahydrofolate + NAD(+). It carries out the reaction uridine(54) in tRNA + (6R)-5,10-methylene-5,6,7,8-tetrahydrofolate + NADPH + H(+) = 5-methyluridine(54) in tRNA + (6S)-5,6,7,8-tetrahydrofolate + NADP(+). Functionally, catalyzes the folate-dependent formation of 5-methyl-uridine at position 54 (M-5-U54) in all tRNAs. The chain is Methylenetetrahydrofolate--tRNA-(uracil-5-)-methyltransferase TrmFO from Desulforamulus reducens (strain ATCC BAA-1160 / DSM 100696 / MI-1) (Desulfotomaculum reducens).